The sequence spans 119 residues: ATP-dependent Clp protease adapter protein ClpS (119 aa).

This sequence belongs to the ClpS family. As to quaternary structure, binds to the N-terminal domain of the chaperone ClpA.

Its function is as follows. Involved in the modulation of the specificity of the ClpAP-mediated ATP-dependent protein degradation. The polypeptide is ATP-dependent Clp protease adapter protein ClpS (Marinobacter nauticus (strain ATCC 700491 / DSM 11845 / VT8) (Marinobacter aquaeolei)).